Consider the following 447-residue polypeptide: Tryptophan 5-hydroxylase 1 (447 aa).

An ACT domain is found at 22–97 (TLIFSLENEV…TVLSVDSPDQ (76 aa)). Residue serine 61 is modified to Phosphoserine; by PKA. The L-tryptophan site is built by tyrosine 238, arginine 260, and threonine 268. Positions 275, 280, and 320 each coordinate Fe cation. L-tryptophan contacts are provided by serine 339 and isoleucine 369.

This sequence belongs to the biopterin-dependent aromatic amino acid hydroxylase family. In terms of assembly, homotetramer. Interacts with DNAJC12. The cofactor is Fe(2+). Post-translationally, ubiquitinated, leading to its degradation by the proteasome. Ubiquitinated is triggered by phosphorylation. Phosphorylated; triggering degradation by the proteasome.

The catalysed reaction is (6R)-L-erythro-5,6,7,8-tetrahydrobiopterin + L-tryptophan + O2 = 5-hydroxy-L-tryptophan + (4aS,6R)-4a-hydroxy-L-erythro-5,6,7,8-tetrahydrobiopterin. It participates in aromatic compound metabolism; serotonin biosynthesis; serotonin from L-tryptophan: step 1/2. Its function is as follows. Oxidizes L-tryptophan to 5-hydroxy-l-tryptophan in the rate-determining step of serotonin biosynthesis. This chain is Tryptophan 5-hydroxylase 1, found in Mus musculus (Mouse).